A 354-amino-acid polypeptide reads, in one-letter code: Glycerol-1-phosphate dehydrogenase [NAD(P)+] (354 aa).

Residues 103–107 (GRSVD) and 125–128 (TAAS) contribute to the NAD(+) site. Position 130 (Asp-130) interacts with substrate. Ser-134 provides a ligand contact to NAD(+). Asp-176 is a binding site for substrate. Positions 176 and 255 each coordinate Zn(2+). His-259 contacts substrate. His-271 is a Zn(2+) binding site.

It belongs to the glycerol-1-phosphate dehydrogenase family. As to quaternary structure, homodimer. Zn(2+) serves as cofactor.

It is found in the cytoplasm. The enzyme catalyses sn-glycerol 1-phosphate + NAD(+) = dihydroxyacetone phosphate + NADH + H(+). It catalyses the reaction sn-glycerol 1-phosphate + NADP(+) = dihydroxyacetone phosphate + NADPH + H(+). It functions in the pathway membrane lipid metabolism; glycerophospholipid metabolism. Functionally, catalyzes the NAD(P)H-dependent reduction of dihydroxyacetonephosphate (DHAP or glycerone phosphate) to glycerol 1-phosphate (G1P). The G1P thus generated is used as the glycerophosphate backbone of phospholipids in the cellular membranes of Archaea. This Nitrosopumilus maritimus (strain SCM1) protein is Glycerol-1-phosphate dehydrogenase [NAD(P)+].